We begin with the raw amino-acid sequence, 446 residues long: Indoleacetamide hydrolase (446 aa).

Residues Lys-71 and Ser-146 each act as charge relay system in the active site. Ser-170 functions as the Acyl-ester intermediate in the catalytic mechanism.

It belongs to the amidase family.

It functions in the pathway plant hormone metabolism; auxin biosynthesis. Its function is as follows. Hydrolyzes indole-3-acetamide (IAM) into indole-3-acetic acid (IAA). The sequence is that of Indoleacetamide hydrolase (iaaH) from Pseudomonas syringae pv. syringae.